Here is a 509-residue protein sequence, read N- to C-terminus: Histidine ammonia-lyase (509 aa).

A cross-link (5-imidazolinone (Ala-Gly)) is located at residues 142–144 (ASG). A 2,3-didehydroalanine (Ser) modification is found at Ser-143.

Belongs to the PAL/histidase family. Contains an active site 4-methylidene-imidazol-5-one (MIO), which is formed autocatalytically by cyclization and dehydration of residues Ala-Ser-Gly.

It is found in the cytoplasm. It catalyses the reaction L-histidine = trans-urocanate + NH4(+). Its pathway is amino-acid degradation; L-histidine degradation into L-glutamate; N-formimidoyl-L-glutamate from L-histidine: step 1/3. This Pseudomonas aeruginosa (strain LESB58) protein is Histidine ammonia-lyase.